The following is a 375-amino-acid chain: UPF0612 protein C569.003 (375 aa).

The protein belongs to the UPF0612 family.

The protein resides in the cytoplasm. In Schizosaccharomyces pombe (strain 972 / ATCC 24843) (Fission yeast), this protein is UPF0612 protein C569.003.